Here is a 544-residue protein sequence, read N- to C-terminus: Serine/threonine-protein kinase PAK 1 (544 aa).

Residues 1–77 (MSNNGLDIQD…KEKERPEISL (77 aa)) are disordered. An N-acetylserine modification is found at serine 2. Serine 21 carries the phosphoserine; by PKB and autocatalysis modification. A compositionally biased stretch (basic and acidic residues) spans 68–77 (KEKERPEISL). The interval 70 to 140 (KERPEISLPS…YNSKKTSNSQ (71 aa)) is autoregulatory region. Positions 75-88 (ISLPSDFEHTIHVG) constitute a CRIB domain. Positions 75–105 (ISLPSDFEHTIHVGFDAVTGEFTGMPEQWAR) are GTPase-binding. A Phosphothreonine; by OXSR1 modification is found at threonine 84. Serine 115 carries the phosphoserine modification. Phosphotyrosine is present on residues tyrosine 131 and tyrosine 142. Phosphoserine; by autocatalysis occurs at positions 144 and 149. A Phosphotyrosine; by JAK2 modification is found at tyrosine 153. The interval 161–193 (VKAVSETPAVPPVSEDEDDDDDGTPPPVIAPRP) is disordered. Serine 174 carries the phosphoserine modification. Positions 174–183 (SEDEDDDDDG) are enriched in acidic residues. A Phosphothreonine modification is found at threonine 184. Serine 198 carries the post-translational modification Phosphoserine; by autocatalysis. Residue tyrosine 200 is modified to Phosphotyrosine; by JAK2. Serine 203 carries the post-translational modification Phosphoserine; by autocatalysis. Threonine 211 and threonine 218 each carry phosphothreonine. The interval 212–250 (PTRDVATSPISPTENNTTPPDALTRNTEKQKKKPKMSDE) is disordered. Phosphoserine occurs at positions 219 and 222. Residues 219-230 (SPISPTENNTTP) show a composition bias toward polar residues. A phosphothreonine mark is found at threonine 224, threonine 228, and threonine 229. Positions 269 to 520 (YTRFEKIGQG…AKELLQHQFL (252 aa)) constitute a Protein kinase domain. 275–283 (IGQGASGTV) lines the ATP pocket. Tyrosine 284 bears the Phosphotyrosine; by JAK2 mark. ATP is bound at residue lysine 298. Aspartate 388 (proton acceptor) is an active-site residue. Threonine 422 bears the Phosphothreonine; by autocatalysis, BRSK2 and PDPK1 mark.

It belongs to the protein kinase superfamily. STE Ser/Thr protein kinase family. STE20 subfamily. Homodimer in its autoinhibited state. Active as monomer. Interacts with GIT1. Component of cytoplasmic complexes, which also contains PXN, ARHGEF7 and GIT1. Interacts with NISCH. Interacts with DVL1; mediates the formation of a DVL1, MUSK and PAK1 ternary complex involved in AChR clustering. Binds to the caspase-cleaved p110 isoform of CDC2L1 and CDC2L2, p110C, but not the full-length proteins. Interacts with ARHGEF7. Interacts tightly with GTP-bound but not GDP-bound CDC42/P21 and RAC1. Probably found in a ternary complex composed of DSCAM, PAK1 and RAC1. Interacts with DSCAM (via cytoplasmic domain); the interaction is direct and enhanced in presence of RAC1. Interacts with SCRIB. Interacts with PDPK1. Interacts (via kinase domain) with RAF1. Interacts with NCK1 and NCK2. Interacts with TBCB. Interacts with BRSK2. Interacts with SNAI1. Interacts with CIB1 (via N-terminal region); the interaction is direct, promotes PAK1 activity and occurs in a calcium-dependent manner. Interacts with INPP5K. Interacts with gamma-tubulin. Interacts with RHOU; the interaction promotes PAK1 activation. Mg(2+) serves as cofactor. Autophosphorylated in trans, meaning that in a dimer, one kinase molecule phosphorylates the other one. Activated by autophosphorylation at Thr-422 in response to a conformation change, triggered by interaction with GTP-bound CDC42 or RAC1. Activated by phosphorylation at Thr-422 by BRSK2 and by PDPK1. Phosphorylated by JAK2 in response to PRL; this increases PAK1 kinase activity. Phosphorylated at Ser-21 by PKB/AKT; this reduces interaction with NCK1 and association with focal adhesion sites. Upon DNA damage, phosphorylated at Thr-211 and translocates to the nucleoplasm. Phosphorylated at tyrosine residues, which can be enhanced by NTN1.

Its subcellular location is the cytoplasm. It is found in the cell junction. The protein resides in the focal adhesion. The protein localises to the cell projection. It localises to the lamellipodium. Its subcellular location is the cell membrane. It is found in the ruffle membrane. The protein resides in the invadopodium. The protein localises to the nucleus. It localises to the nucleoplasm. Its subcellular location is the chromosome. It is found in the cytoskeleton. The protein resides in the microtubule organizing center. The protein localises to the centrosome. The catalysed reaction is L-seryl-[protein] + ATP = O-phospho-L-seryl-[protein] + ADP + H(+). The enzyme catalyses L-threonyl-[protein] + ATP = O-phospho-L-threonyl-[protein] + ADP + H(+). Phosphorylation of Thr-84 by OXSR1 inhibits activation. Activated by binding small G proteins. Binding of GTP-bound CDC42 or RAC1 to the autoregulatory region releases monomers from the autoinhibited dimer, and enables activation by phosphorylation of Thr-422. Functionally, protein kinase involved in intracellular signaling pathways downstream of integrins and receptor-type kinases that plays an important role in cytoskeleton dynamics, in cell adhesion, migration, proliferation, apoptosis, mitosis, and in vesicle-mediated transport processes. Can directly phosphorylate BAD and protects cells against apoptosis. Activated by interaction with CDC42 and RAC1. Functions as a GTPase effector that links the Rho-related GTPases CDC42 and RAC1 to the JNK MAP kinase pathway. Phosphorylates and activates MAP2K1, and thereby mediates activation of downstream MAP kinases. Involved in the reorganization of the actin cytoskeleton, actin stress fibers and of focal adhesion complexes. Phosphorylates the tubulin chaperone TBCB and thereby plays a role in the regulation of microtubule biogenesis and organization of the tubulin cytoskeleton. Plays a role in the regulation of insulin secretion in response to elevated glucose levels. Part of a ternary complex that contains PAK1, DVL1 and MUSK that is important for MUSK-dependent regulation of AChR clustering during the formation of the neuromuscular junction (NMJ). Activity is inhibited in cells undergoing apoptosis, potentially due to binding of CDC2L1 and CDC2L2. Phosphorylates MYL9/MLC2. Phosphorylates RAF1 at 'Ser-338' and 'Ser-339' resulting in: activation of RAF1, stimulation of RAF1 translocation to mitochondria, phosphorylation of BAD by RAF1, and RAF1 binding to BCL2. Phosphorylates SNAI1 at 'Ser-246' promoting its transcriptional repressor activity by increasing its accumulation in the nucleus. In podocytes, promotes NR3C2 nuclear localization. Required for atypical chemokine receptor ACKR2-induced phosphorylation of LIMK1 and cofilin (CFL1) and for the up-regulation of ACKR2 from endosomal compartment to cell membrane, increasing its efficiency in chemokine uptake and degradation. In synapses, seems to mediate the regulation of F-actin cluster formation performed by SHANK3, maybe through CFL1 phosphorylation and inactivation. Plays a role in RUFY3-mediated facilitating gastric cancer cells migration and invasion. In response to DNA damage, phosphorylates MORC2 which activates its ATPase activity and facilitates chromatin remodeling. In neurons, plays a crucial role in regulating GABA(A) receptor synaptic stability and hence GABAergic inhibitory synaptic transmission through its role in F-actin stabilization. In hippocampal neurons, necessary for the formation of dendritic spines and excitatory synapses; this function is dependent on kinase activity and may be exerted by the regulation of actomyosin contractility through the phosphorylation of myosin II regulatory light chain (MLC). Along with GIT1, positively regulates microtubule nucleation during interphase. Phosphorylates FXR1, promoting its localization to stress granules and activity. Phosphorylates ILK on 'Thr-173' and 'Ser-246', promoting nuclear export of ILK. The polypeptide is Serine/threonine-protein kinase PAK 1 (Bos taurus (Bovine)).